A 1316-amino-acid polypeptide reads, in one-letter code: DNA-directed RNA polymerase subunit beta' (1316 aa).

The Zn(2+) site is built by C60, C62, C75, and C78. Positions 535, 537, and 539 each coordinate Mg(2+). Positions 891, 968, 975, and 978 each coordinate Zn(2+).

This sequence belongs to the RNA polymerase beta' chain family. As to quaternary structure, the RNAP catalytic core consists of 2 alpha, 1 beta, 1 beta' and 1 omega subunit. When a sigma factor is associated with the core the holoenzyme is formed, which can initiate transcription. Mg(2+) is required as a cofactor. The cofactor is Zn(2+).

The catalysed reaction is RNA(n) + a ribonucleoside 5'-triphosphate = RNA(n+1) + diphosphate. Its function is as follows. DNA-dependent RNA polymerase catalyzes the transcription of DNA into RNA using the four ribonucleoside triphosphates as substrates. The polypeptide is DNA-directed RNA polymerase subunit beta' (Mycobacterium leprae (strain Br4923)).